A 357-amino-acid chain; its full sequence is MSELKNDRYLRALLRQPVDVTPVWMMRQAGRYLPEYKETRAQAGDFISLCKNTELACEVTLQPLRRFPLDAAILFSDILTIPDAMGLGLYFETGEGPRFKTPINSLDDIKKLPIPDPEDELGYVMNAVRAIRHALQGNVPLIGFSGSPWTLATYMIEGGSSKAFTKIKKMMYSEPQALHLLLDKLADSVILYLNAQIKAGAQSIMIFDTWGGVLTGRDYQLFSLQYMHKIVDGLIRENEGRKVPVTLFTKGGGRWLEAMAATGCDALGLDWTIDIEDARRRVGDKVALQGNMDPSMLYAPPARIEQEVATILAGFGKGTGHVFNLGHGIHQDVPPAHAGAFIDAVHRLSKPYHQDND.

Residues 27-31 (RQAGR), aspartate 77, tyrosine 154, threonine 209, and histidine 327 each bind substrate.

The protein belongs to the uroporphyrinogen decarboxylase family. Homodimer.

The protein localises to the cytoplasm. The enzyme catalyses uroporphyrinogen III + 4 H(+) = coproporphyrinogen III + 4 CO2. The protein operates within porphyrin-containing compound metabolism; protoporphyrin-IX biosynthesis; coproporphyrinogen-III from 5-aminolevulinate: step 4/4. Catalyzes the decarboxylation of four acetate groups of uroporphyrinogen-III to yield coproporphyrinogen-III. This chain is Uroporphyrinogen decarboxylase, found in Proteus mirabilis (strain HI4320).